The sequence spans 1012 residues: MYNSAKQLQRVLTAREIRKTFLDHFTVNHGHKFVRSSPVVPFCDPTVAFVNAGMNQFKSVFLGTAAAPHKRVVNSQKCVRVGGKHNDLSVVGTDGYHHTFFEMLGNWSFGDYFKREACAMALELLRGPYNIDPGRLYVTYFAGDKVLGIPADLECFEIWRSLGFPASRILPFGCADNFWEMGATGPCGPCTEIHIDHRPDLGSVEQRAKLVNAGRSDLTELWNLVFIQYNRHADGSISQLPAHHVDTGMGFERLTAVLQNKSSNYDTDLFTPIFDGIQQAAKTPVYSGSFPDGGNAAVLDTSYRILADHARMVTACLADGMLPDQNQKLRRVLRKALNISEHVFAHDKLLTQLVPIVVETLGEAYPEMAAKQQAVIDLICHEQEVYKNLRESSSKAFAEVLMEFPNLDDIDLMECPGFVPAYRELQMQRCKFSNNTIPGDFLYKLTDTYGLTEESFLKLAELENMNCDLERYRAEVSLAKLKAKGNQRETAGGSLCDLATEQRIAEAQAMLTKRLTPTDNSHKYTYSFDKESDSYQIPPLKTRVLGMLLNDAEVSRTQGSRIQQPFTDLISIVTAGSNFYYESGGQQSDGGKILVSNHQQPDHPHSLDVIGVKHLNDCVVHICKLSSPTDAFQLAIGDEVELQVDAQQRQLNTCHHTATHLLNAAIRSLFKKVTYQVSSSVSSDQCKLELGLLGKRIQKTDVQLIEDLINRVICSAAPVEVQLLSAAEVLEQNDITMVPGEVYPEQGLRLVNVESPELQLSSKELCCGTHATNTSELSCFCIVNLKQTNRARFAFTAVAGQAAENVLKTAALLRHRVDLLEKQFQTDKLTNATEAELQTIRHNMLHTDIKLPYAFKMDTLERITEMLKRIKDSSRTTLKEFVDVEMRTLLQEKPLDTHPFILHYITSSALVEEIPLQRATKLCPDRPILVISVCDSVVKARCCVPEKCITEKFNASAWLQSFADTFNGQIAAPKGQNPQAVCNMKGRRVSNLFEEQLEQAMSKAHAYAKLYL.

The N-terminal 24 residues, 1–24 (MYNSAKQLQRVLTAREIRKTFLDH), are a transit peptide targeting the mitochondrion. Positions 656, 660, 766, and 770 each coordinate Zn(2+).

Belongs to the class-II aminoacyl-tRNA synthetase family. In terms of assembly, monomer. Zn(2+) serves as cofactor.

The protein localises to the mitochondrion. The enzyme catalyses tRNA(Ala) + L-alanine + ATP = L-alanyl-tRNA(Ala) + AMP + diphosphate. In terms of biological role, catalyzes the attachment of alanine to tRNA(Ala) in a two-step reaction: alanine is first activated by ATP to form Ala-AMP and then transferred to the acceptor end of tRNA(Ala). Also edits incorrectly charged tRNA(Ala) via its editing domain. The sequence is that of Alanine--tRNA ligase, mitochondrial from Drosophila melanogaster (Fruit fly).